Consider the following 428-residue polypeptide: MCDVVLGSQWGDEGKGKLVDLLCDDIDVCARCQGGNNAGHTIVVGKVKYDFHMLPSGLVNPKCQNLVGSGVVIHVPSFFAELENLEAKGLDCRDRLFVSSRAHLVFDFHQRTDKLKEAELSTNKKSIGTTGKGIGPTYSTKASRSGIRVHHLVNPDPEAWEDFKTRYMRLVESRQKRYGEFEYDPKEELARFEKYREALRPFVVDSVNFMHEAIAANKKILVEGANALMLDIDFGTYPYVTSSSTGIGGVLTGLGIPPRTIRNVYGVVKAYTTRVGEGPFPTEQLNKVGETLQDVGAEYGVTTGRKRRCGWLDLVVLKYSNSINGYTSLNITKLDVLDKFKEIEVGVAYKLNGKELPSFPEDLIDLAKVEVVYKKFPGWEQDITGIKKYDDLPENAKNYLKFIEDYLQVPIQWVGTGPARDSMLEKKI.

Residues 11–17 (GDEGKGK) and 39–41 (GHT) contribute to the GTP site. Asp-12 (proton acceptor) is an active-site residue. Residues Asp-12 and Gly-39 each contribute to the Mg(2+) site. IMP is bound by residues 12-15 (DEGK), 37-40 (NAGH), Thr-130, Arg-144, Asn-226, Thr-241, and Arg-305. His-40 serves as the catalytic Proton donor. 301–307 (VTTGRKR) contributes to the substrate binding site. GTP is bound by residues Arg-307, 333 to 335 (KLD), and 415 to 417 (GTG).

Belongs to the adenylosuccinate synthetase family. Homodimer. The cofactor is Mg(2+).

It is found in the cytoplasm. The catalysed reaction is IMP + L-aspartate + GTP = N(6)-(1,2-dicarboxyethyl)-AMP + GDP + phosphate + 2 H(+). It participates in purine metabolism; AMP biosynthesis via de novo pathway; AMP from IMP: step 1/2. Functionally, plays an important role in the de novo pathway and in the salvage pathway of purine nucleotide biosynthesis. Catalyzes the first committed step in the biosynthesis of AMP from IMP. This is Adenylosuccinate synthetase from Candida dubliniensis (strain CD36 / ATCC MYA-646 / CBS 7987 / NCPF 3949 / NRRL Y-17841) (Yeast).